The chain runs to 251 residues: Phosphate import ATP-binding protein PstB (251 aa).

An ABC transporter domain is found at 5-246 (IEIENFSAYY…PKNRLTEEYL (242 aa)). 37–44 (GPSGCGKT) lines the ATP pocket.

This sequence belongs to the ABC transporter superfamily. Phosphate importer (TC 3.A.1.7) family. The complex is composed of two ATP-binding proteins (PstB), two transmembrane proteins (PstC and PstA) and a solute-binding protein (PstS).

The protein resides in the cell inner membrane. The enzyme catalyses phosphate(out) + ATP + H2O = ADP + 2 phosphate(in) + H(+). Part of the ABC transporter complex PstSACB involved in phosphate import. Responsible for energy coupling to the transport system. The polypeptide is Phosphate import ATP-binding protein PstB (Thermotoga maritima (strain ATCC 43589 / DSM 3109 / JCM 10099 / NBRC 100826 / MSB8)).